Here is a 506-residue protein sequence, read N- to C-terminus: Cobyric acid synthase (506 aa).

The 198-residue stretch at 251 to 448 (DITIAIVQLP…LHGLFDSDAF (198 aa)) folds into the GATase cobBQ-type domain. The active-site Nucleophile is cysteine 332. The active site involves histidine 440.

Belongs to the CobB/CobQ family. CobQ subfamily.

It participates in cofactor biosynthesis; adenosylcobalamin biosynthesis. In terms of biological role, catalyzes amidations at positions B, D, E, and G on adenosylcobyrinic A,C-diamide. NH(2) groups are provided by glutamine, and one molecule of ATP is hydrogenolyzed for each amidation. In Salmonella agona (strain SL483), this protein is Cobyric acid synthase.